The sequence spans 598 residues: Probable translation initiation factor IF-2 (598 aa).

The tr-type G domain maps to 3–225 (LRCPIVSVLG…GLAQRFLEQK (223 aa)). Positions 12-19 (GHVDHGKT) are G1. GTP is bound at residue 12-19 (GHVDHGKT). The tract at residues 37–41 (GITQH) is G2. The interval 76–79 (DTPG) is G3. GTP-binding positions include 76-80 (DTPGH) and 130-133 (NKVD). The interval 130-133 (NKVD) is G4. The interval 200 to 202 (SAM) is G5.

Belongs to the TRAFAC class translation factor GTPase superfamily. Classic translation factor GTPase family. IF-2 subfamily.

Its function is as follows. Function in general translation initiation by promoting the binding of the formylmethionine-tRNA to ribosomes. Seems to function along with eIF-2. This Methanococcus maripaludis (strain DSM 14266 / JCM 13030 / NBRC 101832 / S2 / LL) protein is Probable translation initiation factor IF-2.